A 191-amino-acid chain; its full sequence is MYGPKDHGWIEVVAGPMYSGKTEELIRRIRRAEIAKQKVQVFKPEIDNRYSKQDVVSHAGDKIQSVPVKSSKEILEKLLDDTDVIGIDEAQFFDDFLVEIVSKIANNNRRVICAGLDMDFKGEPFGPMPKLMAIAEFVDKIQAVCMVCNNPATRTQRLINGKPAKKSDPVVLIGAQESYEARCRKCHRVPR.

ATP-binding positions include 15 to 22 (GPMYSGKT) and 88 to 91 (DEAQ). The active-site Proton acceptor is the E89. Residues C145, C148, C183, and C186 each coordinate Zn(2+).

This sequence belongs to the thymidine kinase family. In terms of assembly, homotetramer.

It localises to the cytoplasm. The catalysed reaction is thymidine + ATP = dTMP + ADP + H(+). The protein is Thymidine kinase of Clostridium botulinum (strain Hall / ATCC 3502 / NCTC 13319 / Type A).